A 1141-amino-acid polypeptide reads, in one-letter code: Eukaryotic translation initiation factor 3 subunit A (1141 aa).

A PCI domain is found at 319 to 501 (LQRMAAHVLL…NSIYFGTDLT (183 aa)). Composition is skewed to basic and acidic residues over residues 588-623 (QNNA…EERE) and 829-899 (AAEE…RGGD). 2 disordered regions span residues 588-631 (QNNA…QNEI) and 829-1141 (AAEE…VKRR). Ser908 carries the phosphoserine modification. Basic and acidic residues-rich tracts occupy residues 920–976 (ERND…EPDT), 990–1051 (SRDD…EPQR), 1059–1087 (DAPR…RGDQ), and 1110–1131 (TREE…KAGD).

This sequence belongs to the eIF-3 subunit A family. Component of the eukaryotic translation initiation factor 3 (eIF-3) complex. The eIF-3 complex interacts with pix.

It localises to the cytoplasm. RNA-binding component of the eukaryotic translation initiation factor 3 (eIF-3) complex, which is involved in protein synthesis of a specialized repertoire of mRNAs and, together with other initiation factors, stimulates binding of mRNA and methionyl-tRNAi to the 40S ribosome. The eIF-3 complex specifically targets and initiates translation of a subset of mRNAs involved in cell proliferation. The polypeptide is Eukaryotic translation initiation factor 3 subunit A (Drosophila simulans (Fruit fly)).